The following is a 224-amino-acid chain: LexA repressor (224 aa).

Positions 31-51 (RAEIAAELGFKSANAAEEHLQ) form a DNA-binding region, H-T-H motif. Catalysis depends on for autocatalytic cleavage activity residues Ser-142 and Lys-179.

It belongs to the peptidase S24 family. In terms of assembly, homodimer.

It carries out the reaction Hydrolysis of Ala-|-Gly bond in repressor LexA.. Its function is as follows. Represses a number of genes involved in the response to DNA damage (SOS response), including recA and lexA. In the presence of single-stranded DNA, RecA interacts with LexA causing an autocatalytic cleavage which disrupts the DNA-binding part of LexA, leading to derepression of the SOS regulon and eventually DNA repair. This is LexA repressor from Acidovorax ebreus (strain TPSY) (Diaphorobacter sp. (strain TPSY)).